A 146-amino-acid polypeptide reads, in one-letter code: MORN repeat-containing protein 4 (146 aa).

4 MORN repeats span residues 16-38, 39-61, 62-84, and 85-107; these read YRGE…DGGT, YLGH…DGSR, YEGE…DNMT, and FEGE…DGSH.

In terms of assembly, interacts with MYO3A. In terms of tissue distribution, retina.

It is found in the cytoplasm. Its subcellular location is the cell projection. The protein resides in the filopodium tip. The protein localises to the stereocilium. Plays a role in promoting axonal degeneration following neuronal injury by toxic insult or trauma. The sequence is that of MORN repeat-containing protein 4 (MORN4) from Bos taurus (Bovine).